A 333-amino-acid polypeptide reads, in one-letter code: Ribosomal RNA small subunit methyltransferase H (333 aa).

S-adenosyl-L-methionine-binding positions include 43–45 (GGH), Asp62, Tyr89, Asp110, and Gln117. The interval 312–333 (RLRAARRIRTTPTRPSPRRRRP) is disordered.

Belongs to the methyltransferase superfamily. RsmH family.

It is found in the cytoplasm. It carries out the reaction cytidine(1402) in 16S rRNA + S-adenosyl-L-methionine = N(4)-methylcytidine(1402) in 16S rRNA + S-adenosyl-L-homocysteine + H(+). Specifically methylates the N4 position of cytidine in position 1402 (C1402) of 16S rRNA. The sequence is that of Ribosomal RNA small subunit methyltransferase H from Beutenbergia cavernae (strain ATCC BAA-8 / DSM 12333 / CCUG 43141 / JCM 11478 / NBRC 16432 / NCIMB 13614 / HKI 0122).